The primary structure comprises 311 residues: Ribonuclease Z (311 aa).

H61, H63, D65, H66, H137, D207, and H263 together coordinate Zn(2+). Residue D65 is the Proton acceptor of the active site.

This sequence belongs to the RNase Z family. As to quaternary structure, homodimer. It depends on Zn(2+) as a cofactor.

It catalyses the reaction Endonucleolytic cleavage of RNA, removing extra 3' nucleotides from tRNA precursor, generating 3' termini of tRNAs. A 3'-hydroxy group is left at the tRNA terminus and a 5'-phosphoryl group is left at the trailer molecule.. Functionally, zinc phosphodiesterase, which displays some tRNA 3'-processing endonuclease activity. Probably involved in tRNA maturation, by removing a 3'-trailer from precursor tRNA. This Thermococcus onnurineus (strain NA1) protein is Ribonuclease Z.